We begin with the raw amino-acid sequence, 255 residues long: 4-hydroxy-tetrahydrodipicolinate reductase (255 aa).

NAD(+) contacts are provided by residues 9-14, D35, 89-91, and 115-118; these read GFKGKM, GTT, and APNF. H145 acts as the Proton donor/acceptor in catalysis. H146 is a (S)-2,3,4,5-tetrahydrodipicolinate binding site. Catalysis depends on K149, which acts as the Proton donor. Residue 155-156 coordinates (S)-2,3,4,5-tetrahydrodipicolinate; sequence GT.

It belongs to the DapB family.

The protein localises to the cytoplasm. The catalysed reaction is (S)-2,3,4,5-tetrahydrodipicolinate + NAD(+) + H2O = (2S,4S)-4-hydroxy-2,3,4,5-tetrahydrodipicolinate + NADH + H(+). It carries out the reaction (S)-2,3,4,5-tetrahydrodipicolinate + NADP(+) + H2O = (2S,4S)-4-hydroxy-2,3,4,5-tetrahydrodipicolinate + NADPH + H(+). It participates in amino-acid biosynthesis; L-lysine biosynthesis via DAP pathway; (S)-tetrahydrodipicolinate from L-aspartate: step 4/4. In terms of biological role, catalyzes the conversion of 4-hydroxy-tetrahydrodipicolinate (HTPA) to tetrahydrodipicolinate. In Streptococcus pneumoniae (strain 70585), this protein is 4-hydroxy-tetrahydrodipicolinate reductase.